The primary structure comprises 1486 residues: Chromosome partition protein MukB (1486 aa).

ATP is bound at residue 34 to 41 (GGNGAGKS). Coiled coils occupy residues 326 to 418 (LEAD…QYNQ), 444 to 480 (LETFQAKELEATEKMLSLEQKMSMAQTAHSQFEQAYQ), and 509 to 603 (RHLA…RAPV). Residues 666 to 783 (PGGSEDQRLN…EVPLFGRAAR (118 aa)) are flexible hinge. 3 coiled-coil regions span residues 835–923 (EAEI…AKLE), 977–1115 (EMLS…TAKA), and 1209–1266 (VEAI…QNVS).

The protein belongs to the SMC family. MukB subfamily. In terms of assembly, homodimerization via its hinge domain. Binds to DNA via its C-terminal region. Interacts, and probably forms a ternary complex, with MukE and MukF via its C-terminal region. The complex formation is stimulated by calcium or magnesium. Interacts with tubulin-related protein FtsZ.

The protein resides in the cytoplasm. Its subcellular location is the nucleoid. Functionally, plays a central role in chromosome condensation, segregation and cell cycle progression. Functions as a homodimer, which is essential for chromosome partition. Involved in negative DNA supercoiling in vivo, and by this means organize and compact chromosomes. May achieve or facilitate chromosome segregation by condensation DNA from both sides of a centrally located replisome during cell division. This Shigella boydii serotype 4 (strain Sb227) protein is Chromosome partition protein MukB.